The chain runs to 786 residues: LPS-assembly protein LptD (786 aa).

Residues 1 to 39 form the signal peptide; that stretch reads MPPKPLFPNVFPGDGAPRKRRLALALLAVPGLVPAVSYA. A disordered region spans residues 767–786; it reads PGYTPLPPPPPPMSRFSNYE. The segment covering 770–779 has biased composition (pro residues); that stretch reads TPLPPPPPPM.

The protein belongs to the LptD family. In terms of assembly, component of the lipopolysaccharide transport and assembly complex. Interacts with LptE and LptA.

It localises to the cell outer membrane. In terms of biological role, together with LptE, is involved in the assembly of lipopolysaccharide (LPS) at the surface of the outer membrane. In Burkholderia lata (strain ATCC 17760 / DSM 23089 / LMG 22485 / NCIMB 9086 / R18194 / 383), this protein is LPS-assembly protein LptD.